A 233-amino-acid chain; its full sequence is Enolase-phosphatase E1 (233 aa).

It belongs to the HAD-like hydrolase superfamily. MasA/MtnC family. As to quaternary structure, monomer. It depends on Mg(2+) as a cofactor.

The enzyme catalyses 5-methylsulfanyl-2,3-dioxopentyl phosphate + H2O = 1,2-dihydroxy-5-(methylsulfanyl)pent-1-en-3-one + phosphate. It functions in the pathway amino-acid biosynthesis; L-methionine biosynthesis via salvage pathway; L-methionine from S-methyl-5-thio-alpha-D-ribose 1-phosphate: step 3/6. Its pathway is amino-acid biosynthesis; L-methionine biosynthesis via salvage pathway; L-methionine from S-methyl-5-thio-alpha-D-ribose 1-phosphate: step 4/6. Functionally, bifunctional enzyme that catalyzes the enolization of 2,3-diketo-5-methylthiopentyl-1-phosphate (DK-MTP-1-P) into the intermediate 2-hydroxy-3-keto-5-methylthiopentenyl-1-phosphate (HK-MTPenyl-1-P), which is then dephosphorylated to form the acireductone 1,2-dihydroxy-3-keto-5-methylthiopentene (DHK-MTPene). The chain is Enolase-phosphatase E1 from Hahella chejuensis (strain KCTC 2396).